A 302-amino-acid chain; its full sequence is Nucleotide-binding protein Bamb_2855 (302 aa).

Position 8-15 (8-15 (GISGSGKS)) interacts with ATP. A GTP-binding site is contributed by 57-60 (DARS).

The protein belongs to the RapZ-like family.

Displays ATPase and GTPase activities. The polypeptide is Nucleotide-binding protein Bamb_2855 (Burkholderia ambifaria (strain ATCC BAA-244 / DSM 16087 / CCUG 44356 / LMG 19182 / AMMD) (Burkholderia cepacia (strain AMMD))).